Reading from the N-terminus, the 252-residue chain is Protein GrpE (252 aa).

Over residues 1–22 (MHNPQSRGHNLSQAMSDQTVTN) the composition is skewed to polar residues. A disordered region spans residues 1–70 (MHNPQSRGHN…EEDQASEATS (70 aa)).

The protein belongs to the GrpE family. Homodimer.

It is found in the cytoplasm. Participates actively in the response to hyperosmotic and heat shock by preventing the aggregation of stress-denatured proteins, in association with DnaK and GrpE. It is the nucleotide exchange factor for DnaK and may function as a thermosensor. Unfolded proteins bind initially to DnaJ; upon interaction with the DnaJ-bound protein, DnaK hydrolyzes its bound ATP, resulting in the formation of a stable complex. GrpE releases ADP from DnaK; ATP binding to DnaK triggers the release of the substrate protein, thus completing the reaction cycle. Several rounds of ATP-dependent interactions between DnaJ, DnaK and GrpE are required for fully efficient folding. The protein is Protein GrpE of Thermosynechococcus vestitus (strain NIES-2133 / IAM M-273 / BP-1).